We begin with the raw amino-acid sequence, 902 residues long: Protein translocase subunit SecA (902 aa).

ATP is bound by residues glutamine 85, 103 to 107 (GEGKT), and aspartate 492. The tract at residues 846-902 (LSYSGGGEEPNQRPKSPRRRSERKIGPNEPCPCGSGKKFKKCHGRVGAPPLPTSQSQ) is disordered. Zn(2+) contacts are provided by cysteine 876, cysteine 878, cysteine 887, and histidine 888.

This sequence belongs to the SecA family. Monomer and homodimer. Part of the essential Sec protein translocation apparatus which comprises SecA, SecYEG and auxiliary proteins SecDF. Other proteins may also be involved. It depends on Zn(2+) as a cofactor.

Its subcellular location is the cell membrane. It is found in the cytoplasm. It catalyses the reaction ATP + H2O + cellular proteinSide 1 = ADP + phosphate + cellular proteinSide 2.. Functionally, part of the Sec protein translocase complex. Interacts with the SecYEG preprotein conducting channel. Has a central role in coupling the hydrolysis of ATP to the transfer of proteins into and across the cell membrane, serving as an ATP-driven molecular motor driving the stepwise translocation of polypeptide chains across the membrane. In Rubrobacter xylanophilus (strain DSM 9941 / JCM 11954 / NBRC 16129 / PRD-1), this protein is Protein translocase subunit SecA.